A 357-amino-acid polypeptide reads, in one-letter code: UDP-N-acetylglucosamine--N-acetylmuramyl-(pentapeptide) pyrophosphoryl-undecaprenol N-acetylglucosamine transferase (357 aa).

Residues 13 to 15 (TGG), asparagine 122, arginine 163, serine 191, and glutamine 288 each bind UDP-N-acetyl-alpha-D-glucosamine.

It belongs to the glycosyltransferase 28 family. MurG subfamily.

The protein localises to the cell inner membrane. The catalysed reaction is di-trans,octa-cis-undecaprenyl diphospho-N-acetyl-alpha-D-muramoyl-L-alanyl-D-glutamyl-meso-2,6-diaminopimeloyl-D-alanyl-D-alanine + UDP-N-acetyl-alpha-D-glucosamine = di-trans,octa-cis-undecaprenyl diphospho-[N-acetyl-alpha-D-glucosaminyl-(1-&gt;4)]-N-acetyl-alpha-D-muramoyl-L-alanyl-D-glutamyl-meso-2,6-diaminopimeloyl-D-alanyl-D-alanine + UDP + H(+). Its pathway is cell wall biogenesis; peptidoglycan biosynthesis. In terms of biological role, cell wall formation. Catalyzes the transfer of a GlcNAc subunit on undecaprenyl-pyrophosphoryl-MurNAc-pentapeptide (lipid intermediate I) to form undecaprenyl-pyrophosphoryl-MurNAc-(pentapeptide)GlcNAc (lipid intermediate II). In Gloeobacter violaceus (strain ATCC 29082 / PCC 7421), this protein is UDP-N-acetylglucosamine--N-acetylmuramyl-(pentapeptide) pyrophosphoryl-undecaprenol N-acetylglucosamine transferase.